Consider the following 63-residue polypeptide: Protein CYSTEINE-RICH TRANSMEMBRANE MODULE 12 (63 aa).

The interval 1-34 is disordered; that stretch reads MQDMRDQNPPQGYPAAEQVSEQPGQDKKKKKPRF. A helical membrane pass occupies residues 40–56; that stretch reads KGDRGFIEGCLFALCCC.

It belongs to the CYSTM1 family. As to quaternary structure, homodimer and heterodimers. Binds weakly to CYSTM4, CYSTM6 and CYSTM7. As to expression, mostly expressed in roots, flowers and siliques and, to a lower extent, in stems and leaves.

Its subcellular location is the cell membrane. It localises to the cytoplasm. Involved in resistance to abiotic stress. The chain is Protein CYSTEINE-RICH TRANSMEMBRANE MODULE 12 from Arabidopsis thaliana (Mouse-ear cress).